The chain runs to 337 residues: DNA-directed RNA polymerase subunit alpha (337 aa).

The alpha N-terminal domain (alpha-NTD) stretch occupies residues 1–233 (MIREKVTVST…DLFIPFLHME (233 aa)). Residues 266-337 (KLALKSIFID…FAIDLPKNQF (72 aa)) are alpha C-terminal domain (alpha-CTD).

This sequence belongs to the RNA polymerase alpha chain family. In plastids the minimal PEP RNA polymerase catalytic core is composed of four subunits: alpha, beta, beta', and beta''. When a (nuclear-encoded) sigma factor is associated with the core the holoenzyme is formed, which can initiate transcription.

It is found in the plastid. It localises to the chloroplast. The catalysed reaction is RNA(n) + a ribonucleoside 5'-triphosphate = RNA(n+1) + diphosphate. Functionally, DNA-dependent RNA polymerase catalyzes the transcription of DNA into RNA using the four ribonucleoside triphosphates as substrates. In Ipomoea purpurea (Common morning glory), this protein is DNA-directed RNA polymerase subunit alpha.